We begin with the raw amino-acid sequence, 120 residues long: MLKFTEEHEWLNIEGDVATVGITAHAAGQLGDLVFVELPEVGASFSKGDDAATVESVKAASEVYCPLDGEITEINEAITADPELVNSDPMGAGWFFKLKLKNVADADGLLDESGYKELIG.

Residues 17–99 form the Lipoyl-binding domain; the sequence is VATVGITAHA…MGAGWFFKLK (83 aa). An N6-lipoyllysine modification is found at lysine 58.

Belongs to the GcvH family. In terms of assembly, the glycine cleavage system is composed of four proteins: P, T, L and H. Requires (R)-lipoate as cofactor.

Its function is as follows. The glycine cleavage system catalyzes the degradation of glycine. The H protein shuttles the methylamine group of glycine from the P protein to the T protein. The sequence is that of Glycine cleavage system H protein from Rhizobium rhizogenes (strain K84 / ATCC BAA-868) (Agrobacterium radiobacter).